Consider the following 955-residue polypeptide: Glycine dehydrogenase (decarboxylating) (955 aa).

An N6-(pyridoxal phosphate)lysine modification is found at Lys-705.

It belongs to the GcvP family. As to quaternary structure, the glycine cleavage system is composed of four proteins: P, T, L and H. Pyridoxal 5'-phosphate serves as cofactor.

It catalyses the reaction N(6)-[(R)-lipoyl]-L-lysyl-[glycine-cleavage complex H protein] + glycine + H(+) = N(6)-[(R)-S(8)-aminomethyldihydrolipoyl]-L-lysyl-[glycine-cleavage complex H protein] + CO2. Its function is as follows. The glycine cleavage system catalyzes the degradation of glycine. The P protein binds the alpha-amino group of glycine through its pyridoxal phosphate cofactor; CO(2) is released and the remaining methylamine moiety is then transferred to the lipoamide cofactor of the H protein. This chain is Glycine dehydrogenase (decarboxylating), found in Aliivibrio fischeri (strain ATCC 700601 / ES114) (Vibrio fischeri).